The primary structure comprises 74 residues: Insertion element IS986 uncharacterized 8.2 kDa protein (74 aa).

This Mycobacterium tuberculosis protein is Insertion element IS986 uncharacterized 8.2 kDa protein.